The chain runs to 80 residues: Conotoxin PnMKLT1-0121 (80 aa).

A signal peptide spans 1-22 (MKLTCMMIVAVLFLTAWTFATA). A propeptide spanning residues 23–49 (DDPRNRLENFFSKTQHEMKNPEASKLN) is cleaved from the precursor. Cystine bridges form between Cys-52-Cys-67, Cys-59-Cys-71, and Cys-66-Cys-75.

It belongs to the conotoxin O1 superfamily. In terms of tissue distribution, expressed by the venom duct.

It is found in the secreted. This Conus pennaceus (Feathered cone) protein is Conotoxin PnMKLT1-0121.